A 339-amino-acid chain; its full sequence is Uroporphyrinogen decarboxylase (339 aa).

Substrate is bound by residues 23–27, aspartate 72, tyrosine 147, threonine 202, and histidine 315; that span reads RQAGR.

This sequence belongs to the uroporphyrinogen decarboxylase family. Homodimer.

Its subcellular location is the cytoplasm. The catalysed reaction is uroporphyrinogen III + 4 H(+) = coproporphyrinogen III + 4 CO2. It participates in porphyrin-containing compound metabolism; protoporphyrin-IX biosynthesis; coproporphyrinogen-III from 5-aminolevulinate: step 4/4. Its function is as follows. Catalyzes the decarboxylation of four acetate groups of uroporphyrinogen-III to yield coproporphyrinogen-III. This Geobacter sp. (strain M21) protein is Uroporphyrinogen decarboxylase.